The following is a 643-amino-acid chain: Phosphatidylinositol-3,5-bisphosphate 3-phosphatase MTMR2 (643 aa).

2 stretches are compositionally biased toward polar residues: residues 1 to 12 (MEKSSSCESLGS) and 23 to 40 (DSLS…VHTK). The interval 1 to 56 (MEKSSSCESLGSQPAAARPPSVDSLSSASTSHSENSVHTKSASVVSSDSISTSADN) is disordered. 2 positions are modified to phosphoserine: Ser6 and Ser9. Positions 41-55 (SASVVSSDSISTSAD) are enriched in low complexity. The residue at position 58 (Ser58) is a Phosphoserine. A GRAM domain is found at 68 to 139 (NKLAEMEEPP…GVINRVEKIG (72 aa)). In terms of domain architecture, Myotubularin phosphatase spans 205 to 580 (GWKLYDPLLE…RHLELWVGYY (376 aa)). Asn330, Asn355, and Ile356 together coordinate a 1,2-diacyl-sn-glycero-3-phospho-(1D-myo-inositol-3,5-bisphosphate). Positions 330, 355, and 356 each coordinate a 1,2-diacyl-sn-glycero-3-phospho-(1D-myo-inositol-3-phosphate). Cys417 (phosphocysteine intermediate) is an active-site residue. A 1,2-diacyl-sn-glycero-3-phospho-(1D-myo-inositol-3,5-bisphosphate)-binding residues include Ser418, Asp419, Gly420, Trp421, Asp422, Arg423, Arg459, and Arg463. Positions 418, 419, 420, 421, 422, and 423 each coordinate a 1,2-diacyl-sn-glycero-3-phospho-(1D-myo-inositol-3-phosphate). An a 1,2-diacyl-sn-glycero-3-phospho-(1D-myo-inositol-3-phosphate)-binding site is contributed by Arg463. Positions 593–627 (IHNRYKELLAKRAELQKKVEELQREISNRSTSSSE) form a coiled coil. The tract at residues 615–643 (QREISNRSTSSSERASSPAQCVTPVQTVV) is disordered. The span at 620 to 631 (NRSTSSSERASS) shows a compositional bias: low complexity. The segment covering 632–643 (PAQCVTPVQTVV) has biased composition (polar residues).

The protein belongs to the protein-tyrosine phosphatase family. Non-receptor class myotubularin subfamily. As to quaternary structure, homodimer (via coiled-coil domain). Heterotetramer consisting of one MTMR2 dimer and one SBF2/MTMR13 dimer; specifically in peripheral nerves stabilizes SBF2/MTMR13 at the membranes and increases MTMR2 catalytic activity towards phosphatidylinositol 3,5-bisphosphate and to a lesser extent towards phosphatidylinositol 3-phosphate. Heterodimer with SBF1/MTMR5; acts as an adapter for the phosphatase MTMR2 to regulate MTMR2 catalytic activity and subcellular location. Heterodimer with MTMR12. Post-translationally, phosphorylation at Ser-58 decreases MTMR2 localization to endocytic vesicular structures.

Its subcellular location is the cytoplasm. The protein localises to the early endosome membrane. It is found in the perinuclear region. It localises to the cell projection. The protein resides in the axon. Its subcellular location is the endosome membrane. The enzyme catalyses a 1,2-diacyl-sn-glycero-3-phospho-(1D-myo-inositol-3,5-bisphosphate) + H2O = a 1,2-diacyl-sn-glycero-3-phospho-(1D-myo-inositol-5-phosphate) + phosphate. It catalyses the reaction a 1,2-diacyl-sn-glycero-3-phospho-(1D-myo-inositol-3-phosphate) + H2O = a 1,2-diacyl-sn-glycero-3-phospho-(1D-myo-inositol) + phosphate. The catalysed reaction is 1,2-dioctanoyl-sn-glycero-3-phospho-(1-D-myo-inositol-3-phosphate) + H2O = 1,2-dioctanoyl-sn-glycero-3-phospho-(1D-myo-inositol) + phosphate. It carries out the reaction 1,2-dioctanoyl-sn-glycero-3-phospho-(1D-myo-inositol-3,5-bisphosphate) + H2O = 1,2-dioctanoyl-sn-glycero-3-phospho-(1D-myo-inositol-5-phosphate) + phosphate. Its function is as follows. Lipid phosphatase that specifically dephosphorylates the D-3 position of phosphatidylinositol 3-phosphate and phosphatidylinositol 3,5-bisphosphate, generating phosphatidylinositol and phosphatidylinositol 5-phosphate. Regulates the level of these phosphoinositides critical for various biological processes including autophagy initiation and autophagosome maturation. In Pongo abelii (Sumatran orangutan), this protein is Phosphatidylinositol-3,5-bisphosphate 3-phosphatase MTMR2.